The primary structure comprises 358 residues: MQEFTWENYSYEDFFGDFSNYSYSTDLPPTLLDSAPCRSESLETNSYVVLITYILVFLLSLLGNSLVMLVILYSRSTCSVTDVYLLNLAIADLLFATTLPIWAASKVHGWTFGTPLCKVVSLVKEVNFYSGILLLACISVDRYLAIVHATRTMIQKRHLVKFICLSMWGVSLILSLPILLFRNAIFPPNSSPVCYEDMGNSTAKWRMVLRILPQTFGFILPLLVMLFCYVFTLRTLFQAHMGQKHRAMRVIFAVVLIFLLCWLPYNLVLLTDTLMRTHVIQETCERRNDIDRALDATEILGFLHSCLNPIIYAFIGQKFRYGLLKILAAHGLISKEFLAKESRPSFVASSSGNTSTTL.

The Extracellular segment spans residues 1–46; sequence MQEFTWENYSYEDFFGDFSNYSYSTDLPPTLLDSAPCRSESLETNS. 2 N-linked (GlcNAc...) asparagine glycosylation sites follow: N8 and N20. Residues 47–73 traverse the membrane as a helical segment; sequence YVVLITYILVFLLSLLGNSLVMLVILY. Topologically, residues 74 to 82 are cytoplasmic; that stretch reads SRSTCSVTD. Residues 83–103 form a helical membrane-spanning segment; sequence VYLLNLAIADLLFATTLPIWA. Over 104–118 the chain is Extracellular; sequence ASKVHGWTFGTPLCK. A disulfide bond links C117 and C194. Residues 119 to 140 form a helical membrane-spanning segment; that stretch reads VVSLVKEVNFYSGILLLACISV. Topologically, residues 141-161 are cytoplasmic; sequence DRYLAIVHATRTMIQKRHLVK. The helical transmembrane segment at 162-181 threads the bilayer; sequence FICLSMWGVSLILSLPILLF. At 182 to 206 the chain is on the extracellular side; it reads RNAIFPPNSSPVCYEDMGNSTAKWR. The helical transmembrane segment at 207 to 229 threads the bilayer; the sequence is MVLRILPQTFGFILPLLVMLFCY. Topologically, residues 230 to 249 are cytoplasmic; the sequence is VFTLRTLFQAHMGQKHRAMR. A helical membrane pass occupies residues 250 to 271; the sequence is VIFAVVLIFLLCWLPYNLVLLT. At 272 to 292 the chain is on the extracellular side; that stretch reads DTLMRTHVIQETCERRNDIDR. The helical transmembrane segment at 293-313 threads the bilayer; it reads ALDATEILGFLHSCLNPIIYA. Residues 314–358 are Cytoplasmic-facing; it reads FIGQKFRYGLLKILAAHGLISKEFLAKESRPSFVASSSGNTSTTL.

Belongs to the G-protein coupled receptor 1 family. Interacts with IL8. Interacts with GNAI2. Post-translationally, phosphorylated upon ligand binding; which is required for desensitization. Expressed preferentially in neutrophils.

It is found in the cell membrane. Its function is as follows. Receptor for interleukin-8 which is a powerful neutrophil chemotactic factor. Binding of IL-8 to the receptor causes activation of neutrophils. This response is mediated via a G-protein that activates a phosphatidylinositol-calcium second messenger system. Binds to IL-8 with high affinity. Also binds with high affinity to CXCL3, GRO/MGSA and NAP-2. This Oryctolagus cuniculus (Rabbit) protein is C-X-C chemokine receptor type 2 (CXCR2).